The following is a 196-amino-acid chain: DnaA initiator-associating protein DiaA (196 aa).

The SIS domain occupies 34–196; the sequence is LVHSLLNGNK…DNTLFLHQDD (163 aa).

The protein belongs to the SIS family. DiaA subfamily. As to quaternary structure, homotetramer; dimer of dimers.

Its function is as follows. Required for the timely initiation of chromosomal replication via direct interactions with the DnaA initiator protein. In Salmonella paratyphi A (strain ATCC 9150 / SARB42), this protein is DnaA initiator-associating protein DiaA.